Here is an 863-residue protein sequence, read N- to C-terminus: Penicillin-binding protein 1A (863 aa).

Topologically, residues 1–28 (MTENRDNKTSQSEKTTQKKKKKKFKAFK) are cytoplasmic. The chain crosses the membrane as a helical; Signal-anchor for type II membrane protein span at residues 29-49 (IILITFITLIVISLVTAIGIT). The Extracellular portion of the chain corresponds to 50 to 863 (LAIIKTSPDI…KPIIRPKKHF (814 aa)). The tract at residues 71–248 (SKIYDDKGEL…PSVYYPYSRT (178 aa)) is transglycosylase. Residue E110 is the Proton donor; for transglycosylase activity of the active site. The tract at residues 392–674 (ASAVLTDYHT…AAALFGKIMN (283 aa)) is transpeptidase. S431 acts as the Acyl-ester intermediate; for transpeptidase activity in catalysis. The tract at residues 774–863 (DDDMYVLPDK…KPIIRPKKHF (90 aa)) is disordered. Residues 808–836 (EDATNEASTEPSPNTDTVPEDSTNNLDPT) show a composition bias toward polar residues. Over residues 837-846 (KNTEKKPSDK) the composition is skewed to basic and acidic residues. Residues 847 to 863 (KNKKHVIKPIIRPKKHF) are compositionally biased toward basic residues.

This sequence in the N-terminal section; belongs to the glycosyltransferase 51 family. In the C-terminal section; belongs to the transpeptidase family.

The protein localises to the cell membrane. The catalysed reaction is [GlcNAc-(1-&gt;4)-Mur2Ac(oyl-L-Ala-gamma-D-Glu-L-Lys-D-Ala-D-Ala)](n)-di-trans,octa-cis-undecaprenyl diphosphate + beta-D-GlcNAc-(1-&gt;4)-Mur2Ac(oyl-L-Ala-gamma-D-Glu-L-Lys-D-Ala-D-Ala)-di-trans,octa-cis-undecaprenyl diphosphate = [GlcNAc-(1-&gt;4)-Mur2Ac(oyl-L-Ala-gamma-D-Glu-L-Lys-D-Ala-D-Ala)](n+1)-di-trans,octa-cis-undecaprenyl diphosphate + di-trans,octa-cis-undecaprenyl diphosphate + H(+). The enzyme catalyses Preferential cleavage: (Ac)2-L-Lys-D-Ala-|-D-Ala. Also transpeptidation of peptidyl-alanyl moieties that are N-acyl substituents of D-alanine.. The protein operates within cell wall biogenesis; peptidoglycan biosynthesis. In terms of biological role, cell wall formation. Synthesis of cross-linked peptidoglycan from the lipid intermediates. The enzyme has a penicillin-insensitive transglycosylase N-terminal domain (formation of linear glycan strands) and a penicillin-sensitive transpeptidase C-terminal domain (cross-linking of the peptide subunits). The chain is Penicillin-binding protein 1A (pbpA) from Clostridium novyi (strain NT).